The chain runs to 151 residues: Small ribosomal subunit protein uS15 (151 aa).

Phosphoserine occurs at positions 21 and 32.

It belongs to the universal ribosomal protein uS15 family. In terms of assembly, component of the small ribosomal subunit (SSU). Mature yeast ribosomes consist of a small (40S) and a large (60S) subunit. The 40S small subunit contains 1 molecule of ribosomal RNA (18S rRNA) and at least 33 different proteins. The large 60S subunit contains 3 rRNA molecules (25S, 5.8S and 5S rRNA) and at least 46 different proteins.

It localises to the cytoplasm. Its function is as follows. Component of the ribosome, a large ribonucleoprotein complex responsible for the synthesis of proteins in the cell. The small ribosomal subunit (SSU) binds messenger RNAs (mRNAs) and translates the encoded message by selecting cognate aminoacyl-transfer RNA (tRNA) molecules. The large subunit (LSU) contains the ribosomal catalytic site termed the peptidyl transferase center (PTC), which catalyzes the formation of peptide bonds, thereby polymerizing the amino acids delivered by tRNAs into a polypeptide chain. The nascent polypeptides leave the ribosome through a tunnel in the LSU and interact with protein factors that function in enzymatic processing, targeting, and the membrane insertion of nascent chains at the exit of the ribosomal tunnel. The sequence is that of Small ribosomal subunit protein uS15 (rps13) from Schizosaccharomyces pombe (strain 972 / ATCC 24843) (Fission yeast).